We begin with the raw amino-acid sequence, 269 residues long: uncharacterized protein (269 aa).

Residues methionine 1–leucine 21 are disordered.

This is an uncharacterized protein from Homo sapiens (Human).